A 371-amino-acid polypeptide reads, in one-letter code: MSNPLRLAFRPFALLYEAIVQTRNQLFNRAVLRAWESPMPVVSVGNLSAGGTGKTPMVDWVVKYYLSIGFKPAIISRGYKRQSKGVQLVSDGNNVLLSSREAGDETAMLAWNNPDAIVVVASKRKQGVKLITKRFAQRLPSVIILDDAFQHRQIARSLDIVLVNAEEPFVEAAMLPEGRLREPKKNLLRADVVVLNKITDLEAATPSIKALEEMGRPLVKARLSTGELICFSGDATTLDEPATAHHLNAFAFAGIAKPESFVTSLQHEGVNVGATRFVRDHAPYSAKMLRAIRRQAEEQGLCLITTEKDYFRLLGQPELLSIITALPCYYLKIAPDIFDGKALLQEKLNAVVHYVPKPEPPKKIEEPYRRW.

48 to 55 (SAGGTGKT) serves as a coordination point for ATP.

Belongs to the LpxK family.

The catalysed reaction is a lipid A disaccharide + ATP = a lipid IVA + ADP + H(+). It participates in glycolipid biosynthesis; lipid IV(A) biosynthesis; lipid IV(A) from (3R)-3-hydroxytetradecanoyl-[acyl-carrier-protein] and UDP-N-acetyl-alpha-D-glucosamine: step 6/6. Its function is as follows. Transfers the gamma-phosphate of ATP to the 4'-position of a tetraacyldisaccharide 1-phosphate intermediate (termed DS-1-P) to form tetraacyldisaccharide 1,4'-bis-phosphate (lipid IVA). This chain is Tetraacyldisaccharide 4'-kinase, found in Chlorobium chlorochromatii (strain CaD3).